We begin with the raw amino-acid sequence, 321 residues long: Nodulation protein D 1 (321 aa).

The region spanning 6 to 63 (LDLNLLVALDALMTERKLTAAARSINLSQPAMSAAITRLRTYFRDELFTMNGRELVPT) is the HTH lysR-type domain. Positions 23 to 42 (LTAAARSINLSQPAMSAAIT) form a DNA-binding region, H-T-H motif.

It belongs to the LysR transcriptional regulatory family.

Functionally, nodD regulates the expression of the nodABCFE genes which encode other nodulation proteins. NodD is also a negative regulator of its own expression. Binds flavonoids as inducers. The polypeptide is Nodulation protein D 1 (nodD1) (Bradyrhizobium japonicum).